The primary structure comprises 485 residues: ATP-dependent rRNA helicase RRP3 (485 aa).

Basic residues predominate over residues 1–10; the sequence is MPVLKKRKLA. The segment at 1-55 is disordered; sequence MPVLKKRKLAHTAQPDPIVSDLESSSSEASQQSHDEQLTAANEQDDESPQVQREE. Low complexity predominate over residues 20–32; the sequence is SDLESSSSEASQQ. Residues 59–87 carry the Q motif motif; the sequence is KSFKDLGIIDSLCEACEALGYKSPTPIQA. The region spanning 90 to 261 is the Helicase ATP-binding domain; that stretch reads IPLALQGRDL…RASLSNPLRV (172 aa). 103-110 contributes to the ATP binding site; the sequence is AETGSGKT. Residues 209–212 carry the DEAD box motif; the sequence is DEAD. The Helicase C-terminal domain occupies 285 to 433; sequence YKDIYLVYLL…EYKVEKEEVM (149 aa). Over residues 449–458 the composition is skewed to basic and acidic residues; it reads EMKDLHEKRG. The interval 449–485 is disordered; that stretch reads EMKDLHEKRGSRGATLKGRRPAKGAKRGRDEMDREEG. Residues 465–474 show a composition bias toward basic residues; it reads KGRRPAKGAK. A compositionally biased stretch (basic and acidic residues) spans 475 to 485; that stretch reads RGRDEMDREEG.

Belongs to the DEAD box helicase family. DDX47/RRP3 subfamily. In terms of assembly, interacts with the SSU processome.

The protein localises to the nucleus. It catalyses the reaction ATP + H2O = ADP + phosphate + H(+). ATP-dependent rRNA helicase required for pre-ribosomal RNA processing. Involved in the maturation of the 35S-pre-rRNA and to its cleavage to mature 18S rRNA. The polypeptide is ATP-dependent rRNA helicase RRP3 (Ajellomyces capsulatus (strain NAm1 / WU24) (Darling's disease fungus)).